Here is a 134-residue protein sequence, read N- to C-terminus: ATP synthase epsilon chain (134 aa).

Belongs to the ATPase epsilon chain family. As to quaternary structure, F-type ATPases have 2 components, CF(1) - the catalytic core - and CF(0) - the membrane proton channel. CF(1) has five subunits: alpha(3), beta(3), gamma(1), delta(1), epsilon(1). CF(0) has three main subunits: a, b and c.

It localises to the cell inner membrane. Its function is as follows. Produces ATP from ADP in the presence of a proton gradient across the membrane. This is ATP synthase epsilon chain from Rhodospirillum rubrum (strain ATCC 11170 / ATH 1.1.1 / DSM 467 / LMG 4362 / NCIMB 8255 / S1).